We begin with the raw amino-acid sequence, 427 residues long: UPF0597 protein CD630_32320 (427 aa).

This sequence belongs to the UPF0597 family.

This chain is UPF0597 protein CD630_32320, found in Clostridioides difficile (strain 630) (Peptoclostridium difficile).